The chain runs to 521 residues: Protein NRT1/ PTR FAMILY 5.5 (521 aa).

12 helical membrane passes run 3-23 (VLSW…LYLT), 35-55 (AIVN…QFLV), 62-82 (FWML…LAIS), 96-116 (FYVA…SLGV), 134-154 (LVSF…AAIA), 165-185 (FTIP…GACS), 279-299 (VPLF…NTFF), 310-327 (FGSW…SEAA), 356-376 (PYGI…AAHV), 394-414 (VPMS…ITGI), 440-460 (VGVC…VGSV), and 478-498 (YYWV…IVTY).

This sequence belongs to the major facilitator superfamily. Proton-dependent oligopeptide transporter (POT/PTR) (TC 2.A.17) family. Expressed in roots.

Its subcellular location is the membrane. This chain is Protein NRT1/ PTR FAMILY 5.5 (NPF5.5), found in Arabidopsis thaliana (Mouse-ear cress).